A 291-amino-acid polypeptide reads, in one-letter code: GTPase Era (291 aa).

Residues 2–167 form the Era-type G domain; the sequence is KSGFVSIIGR…LDEIVKYLDE (166 aa). The G1 stretch occupies residues 10–17; it reads GRTNAGKS. 10-17 provides a ligand contact to GTP; it reads GRTNAGKS. The G2 stretch occupies residues 36-40; the sequence is NATRR. Residues 57 to 60 are G3; sequence DTPG. Residues 57 to 61 and 116 to 119 each bind GTP; these read DTPGL and NKVD. Residues 116 to 119 are G4; it reads NKVD. The G5 stretch occupies residues 146-148; that stretch reads YSS. Positions 186-274 constitute a KH type-2 domain; that stretch reads YRDFILESIY…LLKLFVTVKK (89 aa).

Belongs to the TRAFAC class TrmE-Era-EngA-EngB-Septin-like GTPase superfamily. Era GTPase family. As to quaternary structure, monomer.

The protein localises to the cytoplasm. It is found in the cell inner membrane. An essential GTPase that binds both GDP and GTP, with rapid nucleotide exchange. Plays a role in 16S rRNA processing and 30S ribosomal subunit biogenesis and possibly also in cell cycle regulation and energy metabolism. This is GTPase Era from Campylobacter jejuni (strain RM1221).